The following is a 250-amino-acid chain: Probable transcriptional regulatory protein SYNPCC7002_A1640 (250 aa).

It belongs to the TACO1 family.

The protein resides in the cytoplasm. The polypeptide is Probable transcriptional regulatory protein SYNPCC7002_A1640 (Picosynechococcus sp. (strain ATCC 27264 / PCC 7002 / PR-6) (Agmenellum quadruplicatum)).